The sequence spans 1002 residues: Vacuolar protein sorting-associated protein 18 homolog (1002 aa).

At Ser344 the chain carries Phosphoserine. A CHCR repeat occupies 650–804 (LMAQGSRLEV…DIKGTNDVKK (155 aa)). A coiled-coil region spans residues 827 to 880 (FEKIDNFKEAICDALRDYNQRIQELQREMAETTEQTDRVTAELQQLRQHSLTVE). An RING-type; degenerate zinc finger spans residues 885–924 (CEICEMMLLVKPFFIFICGHKFHSDCLEKHVVPLLTKEQC).

Belongs to the VPS18 family. Component of the class C core vacuole/endosome tethering (CORVET) complex composed of at least Vps8, dor/Vps18, car/Vps33A and Vps16A; unlike in other species, Vps11 is not part of the Drosophila complex. Due to the reduced number of components the Drosophila CORVET complex is often referred to as the miniCORVET complex. Interacts with car/Vps33A. Interacts with ema. Component of the homotypic fusion and vacuole protein sorting (HOPS) complex, composed of Vps16A, car/Vps33A, dor/Vps18, Vps39, Vps11 and lt/Vps41. The tethering complex core made up of Vps16A, car/Vps33A and dor/Vps18 and shared by both HOPS and CORVET, preferentially associates with CORVET-specific Vps8 over HOPS-specific lt/Vps41. Interacts with Syx17 (via SNARE domain); the interaction may involve multiple components of the HOPS complex and may promote assembly of the Syx17-Snap29-Vamp7 trans-SNARE complex.

It localises to the early endosome. Its subcellular location is the late endosome membrane. It is found in the lysosome membrane. The protein resides in the cytoplasmic vesicle. The protein localises to the autophagosome. Core component of the class C core vacuole/endosome tethering (CORVET) and the homotypic fusion and vacuole protein sorting (HOPS) tethering complexes involved in endo-lysosomal vesicle trafficking and lysosome biogenesis. The CORVET complex facilitates docking and fusion of endosomal vesicles during endosome maturation, acts upstream of HOPS, but is not involved in autophagic flux. The CORVET complex may cooperate with the early endosomal tether Rbsn-5 to mediate endosomal fusion. The HOPS complex facilitates docking and fusion of lysosomes with late endosomes and several other types of vesicles. The HOPS complex is also involved in autophagy and crinophagy (the elimination of unused secretory granules through their fusion with lysosomes). The HOPS complex mediates autophagocitic flux, probably by binding autophagosome-associated Syx17/syntaxin 17, promoting assembly of the trans-SNARE complex and instigating autophagosome-lysosome fusion. Independent of Syx17/syntaxin 17, HOPS is involved in biosynthetic transport to lysosomes and lysosome-related organelles such as eye-pigment granules. Required for endocytic degradation of boss/bride of sevenless and N/Notch in developing ommatidia. Required for autophagocytosis-dependent remodeling of myofibrils and transverse-tubules (T-tubules) during metamorphosis. In larval neuromuscular junctions, essential for endosomal sorting that traffics old or dysfunctional synaptic vesicle proteins through a degradative endolysosomal route. Required to maintain normal levels of rush, which functions in endosome formation and trafficking. This chain is Vacuolar protein sorting-associated protein 18 homolog, found in Drosophila melanogaster (Fruit fly).